A 726-amino-acid polypeptide reads, in one-letter code: DNA ligase (726 aa).

NAD(+) contacts are provided by residues 34-38, 83-84, and Glu115; these read DAEYD and SL. Residue Lys117 is the N6-AMP-lysine intermediate of the active site. Arg138, Glu190, Lys306, and Lys330 together coordinate NAD(+). Residues Cys424, Cys427, Cys442, and Cys448 each contribute to the Zn(2+) site. The BRCT domain maps to 608-698; sequence SRGNALAGKT…RTADDQATPA (91 aa). The tract at residues 690 to 726 is disordered; it reads TADDQATPASDRRAATASVPPSDDAPGSPRQLDFDLT.

It belongs to the NAD-dependent DNA ligase family. LigA subfamily. It depends on Mg(2+) as a cofactor. The cofactor is Mn(2+).

It carries out the reaction NAD(+) + (deoxyribonucleotide)n-3'-hydroxyl + 5'-phospho-(deoxyribonucleotide)m = (deoxyribonucleotide)n+m + AMP + beta-nicotinamide D-nucleotide.. DNA ligase that catalyzes the formation of phosphodiester linkages between 5'-phosphoryl and 3'-hydroxyl groups in double-stranded DNA using NAD as a coenzyme and as the energy source for the reaction. It is essential for DNA replication and repair of damaged DNA. The polypeptide is DNA ligase (Roseiflexus sp. (strain RS-1)).